The sequence spans 199 residues: GTP cyclohydrolase-2 (199 aa).

50 to 54 (RIHSE) lines the GTP pocket. Residues Cys55, Cys66, and Cys68 each contribute to the Zn(2+) site. Residues Gln71, 93 to 95 (EGR), and Thr115 contribute to the GTP site. The active-site Proton acceptor is Asp127. Arg129 serves as the catalytic Nucleophile. The GTP site is built by Thr150 and Lys155.

The protein belongs to the GTP cyclohydrolase II family. As to quaternary structure, homodimer. Zn(2+) serves as cofactor.

It carries out the reaction GTP + 4 H2O = 2,5-diamino-6-hydroxy-4-(5-phosphoribosylamino)-pyrimidine + formate + 2 phosphate + 3 H(+). It functions in the pathway cofactor biosynthesis; riboflavin biosynthesis; 5-amino-6-(D-ribitylamino)uracil from GTP: step 1/4. Its function is as follows. Catalyzes the conversion of GTP to 2,5-diamino-6-ribosylamino-4(3H)-pyrimidinone 5'-phosphate (DARP), formate and pyrophosphate. The sequence is that of GTP cyclohydrolase-2 from Buchnera aphidicola subsp. Baizongia pistaciae (strain Bp).